The sequence spans 109 residues: MEQFEAISVEQAYLRWKEGKTALVDIRDPQSYEAGHAPGAFHLTNSSLHTFMQQTDFDQPVMVMCYHGNSSKGAAQYLLQQGFDVVYSIDGGFEAWARSYPQDITSESR.

Residues 17-105 (KEGKTALVDI…WARSYPQDIT (89 aa)) form the Rhodanese domain. C65 acts as the Cysteine persulfide intermediate in catalysis.

The protein belongs to the GlpE family.

The protein localises to the cytoplasm. It carries out the reaction thiosulfate + hydrogen cyanide = thiocyanate + sulfite + 2 H(+). It catalyses the reaction thiosulfate + [thioredoxin]-dithiol = [thioredoxin]-disulfide + hydrogen sulfide + sulfite + 2 H(+). In terms of biological role, transferase that catalyzes the transfer of sulfur from thiosulfate to thiophilic acceptors such as cyanide or dithiols. May function in a CysM-independent thiosulfate assimilation pathway by catalyzing the conversion of thiosulfate to sulfite, which can then be used for L-cysteine biosynthesis. This is Thiosulfate sulfurtransferase GlpE from Yersinia pestis bv. Antiqua (strain Antiqua).